Reading from the N-terminus, the 496-residue chain is Transmembrane protein 104 (496 aa).

At M1–E10 the chain is on the cytoplasmic side. Residues L11–L31 traverse the membrane as a helical segment. Over T32 to A36 the chain is Extracellular. The chain crosses the membrane as a helical span at residues F37–F57. Topologically, residues V58–N146 are cytoplasmic. Residues T81 to S100 form a disordered region. Residues S91–S100 are compositionally biased toward low complexity. The helical transmembrane segment at L147 to V167 threads the bilayer. The Extracellular segment spans residues P168 to R204. A glycan (N-linked (GlcNAc...) asparagine) is linked at N193. Residues V205–F225 traverse the membrane as a helical segment. The Cytoplasmic portion of the chain corresponds to D226–L233. A helical transmembrane segment spans residues Q234–V254. Residues R255 to P265 are Extracellular-facing. Residues P266–C286 traverse the membrane as a helical segment. At Q287 to L306 the chain is on the cytoplasmic side. The chain crosses the membrane as a helical span at residues L307–F327. Topologically, residues C328 to R354 are extracellular. Residues F355 to T375 traverse the membrane as a helical segment. Topologically, residues L376 to R397 are cytoplasmic. Residues V398 to L418 traverse the membrane as a helical segment. Topologically, residues E419 to L421 are extracellular. Residues V422–V442 traverse the membrane as a helical segment. Over Y443–W470 the chain is Cytoplasmic. A helical transmembrane segment spans residues V471–L491. Residues K492–L496 lie on the Extracellular side of the membrane.

This sequence belongs to the TMEM104 family.

The protein resides in the membrane. The protein is Transmembrane protein 104 (Tmem104) of Mus musculus (Mouse).